Here is a 388-residue protein sequence, read N- to C-terminus: Succinate--CoA ligase [ADP-forming] subunit beta (388 aa).

Residues 9–244 (KEILRKFGVA…LDEEDPAEIE (236 aa)) enclose the ATP-grasp domain. ATP is bound by residues K46, 53–55 (GRG), E99, A102, and E107. Mg(2+) is bound by residues N199 and D213. Substrate-binding positions include N264 and 321–323 (GIM).

The protein belongs to the succinate/malate CoA ligase beta subunit family. Heterotetramer of two alpha and two beta subunits. Mg(2+) is required as a cofactor.

The enzyme catalyses succinate + ATP + CoA = succinyl-CoA + ADP + phosphate. The catalysed reaction is GTP + succinate + CoA = succinyl-CoA + GDP + phosphate. It participates in carbohydrate metabolism; tricarboxylic acid cycle; succinate from succinyl-CoA (ligase route): step 1/1. In terms of biological role, succinyl-CoA synthetase functions in the citric acid cycle (TCA), coupling the hydrolysis of succinyl-CoA to the synthesis of either ATP or GTP and thus represents the only step of substrate-level phosphorylation in the TCA. The beta subunit provides nucleotide specificity of the enzyme and binds the substrate succinate, while the binding sites for coenzyme A and phosphate are found in the alpha subunit. In Burkholderia multivorans (strain ATCC 17616 / 249), this protein is Succinate--CoA ligase [ADP-forming] subunit beta.